The following is a 396-amino-acid chain: 3-amino-4-hydroxybenzoate 2-monooxygenase PtnB3 (396 aa).

Residues Ala-19, Glu-38–Gln-39, and Arg-112 each bind FAD. Catalysis depends on Tyr-217, which acts as the Proton acceptor. Asp-295 is a binding site for FAD.

Belongs to the 6-hydroxynicotinate 3-monooxygenase family. FAD is required as a cofactor.

The enzyme catalyses 3-amino-4-hydroxybenzoate + NADPH + O2 + H(+) = 3-amino-2,4-dihydroxybenzoate + NADP(+) + H2O. It functions in the pathway antibiotic biosynthesis. Its function is as follows. Part of a gene cluster involved in the biosynthesis of thioplatencin (ThioPTN) and platencin (PTN), potent and selective inhibitors of bacterial and mammalian fatty acid synthases. Catalyzes the hydroxylation of 3-amino-4-hydroxybenzoate (3,4-AHBA) to 3-amino-2,4-dihydroxybenzoate (3,2,4-ADHBA). The protein is 3-amino-4-hydroxybenzoate 2-monooxygenase PtnB3 of Streptomyces platensis.